Consider the following 210-residue polypeptide: Large ribosomal subunit protein bL25 (210 aa).

A compositionally biased stretch (low complexity) spans 191 to 200 (EAPAEGAAAP). Residues 191–210 (EAPAEGAAAPAPAPAKKGKK) form a disordered region.

The protein belongs to the bacterial ribosomal protein bL25 family. CTC subfamily. As to quaternary structure, part of the 50S ribosomal subunit; part of the 5S rRNA/L5/L18/L25 subcomplex. Contacts the 5S rRNA. Binds to the 5S rRNA independently of L5 and L18.

This is one of the proteins that binds to the 5S RNA in the ribosome where it forms part of the central protuberance. The polypeptide is Large ribosomal subunit protein bL25 (Paracidovorax citrulli (strain AAC00-1) (Acidovorax citrulli)).